A 36-amino-acid polypeptide reads, in one-letter code: Kappa-actitoxin-Avd6a (36 aa).

The region spanning 2 to 36 is the ShKT domain; it reads CKDNFAAATCKHVKENKNCGSQKYATNCAKTCGKC. 3 cysteine pairs are disulfide-bonded: C2–C36, C11–C29, and C20–C33. Residues 24 to 25 form a crucial for binding to potassium channels region; it reads KY.

This sequence belongs to the sea anemone type 1 potassium channel toxin family. Type 1b subfamily.

It localises to the secreted. The protein localises to the nematocyst. In terms of biological role, blocks voltage-gated potassium channels Kv1.2/KCNA2 (IC(50)=140 nM). This Anemonia sulcata (Mediterranean snakelocks sea anemone) protein is Kappa-actitoxin-Avd6a.